A 1188-amino-acid chain; its full sequence is DNA-directed RNA polymerase subunit beta (1188 aa).

Belongs to the RNA polymerase beta chain family. In terms of assembly, the RNAP catalytic core consists of 2 alpha, 1 beta, 1 beta' and 1 omega subunit. When a sigma factor is associated with the core the holoenzyme is formed, which can initiate transcription.

It catalyses the reaction RNA(n) + a ribonucleoside 5'-triphosphate = RNA(n+1) + diphosphate. Its function is as follows. DNA-dependent RNA polymerase catalyzes the transcription of DNA into RNA using the four ribonucleoside triphosphates as substrates. This chain is DNA-directed RNA polymerase subunit beta, found in Streptococcus gordonii (strain Challis / ATCC 35105 / BCRC 15272 / CH1 / DL1 / V288).